The primary structure comprises 284 residues: Tripartite motif-containing protein 12A (284 aa).

Residues 15 to 59 (CPVCLNLMVKPVSADCGHTFCQGCITLYFESIKCDKKVFICPVCR) form an RING-type zinc finger. Residues 91 to 132 (QKVFNCARHGKKLQLFCRKDMMAICWLCERSQEHRGHKTALI) form a B box-type zinc finger. Residues Cys96, His99, Cys118, and His124 each contribute to the Zn(2+) site. The stretch at 130–234 (ALIEEVAQEY…QSKLLEDFIS (105 aa)) forms a coiled coil.

The protein belongs to the TRIM/RBCC family. As to expression, expressed in embryonic CNS, liver, kidney, olfactory epithelium.

Its subcellular location is the cytoplasm. In Mus musculus (Mouse), this protein is Tripartite motif-containing protein 12A (Trim12a).